The primary structure comprises 388 residues: Na(+)/H(+) antiporter NhaA (388 aa).

The Cytoplasmic portion of the chain corresponds to 1–11 (MKHLHRFFSSD). The chain crosses the membrane as a helical span at residues 12–31 (ASGGIILIIAAILAMIMANS). Residues 32–58 (GATSGWYHDFLETPVQLRVGSLEINKN) are Periplasmic-facing. The helical transmembrane segment at 59–80 (MLLWINDALMAVFFLLVGLEVK) threads the bilayer. The Cytoplasmic segment spans residues 81-96 (RELMQGSLASLRQAAF). Residues 97–116 (PVIAAIGGMIVPALLYLAFN) traverse the membrane as a helical segment. At 117–122 (YADPIT) the chain is on the periplasmic side. A helical membrane pass occupies residues 123–130 (REGWAIPA). Residues 131–154 (ATDIAFALGVLALLGSRVPLVLKI) are Cytoplasmic-facing. The helical transmembrane segment at 155-176 (FLMALAIIDDLGAIIIIALFYT) threads the bilayer. At 177-180 (NDLS) the chain is on the periplasmic side. The chain crosses the membrane as a helical span at residues 181–200 (MASLGVAAVAIAVLAVLNLC). The Cytoplasmic segment spans residues 201–204 (GVRR). Residues 205 to 222 (TGVYILVGVVLWTAVLKS) traverse the membrane as a helical segment. A topological domain (periplasmic) is located at residue Gly223. The helical transmembrane segment at 224–236 (VHATLAGVIVGFF) threads the bilayer. The Cytoplasmic portion of the chain corresponds to 237–253 (IPLKEKHGRSPAKRLEH). A helical transmembrane segment spans residues 254 to 272 (VLHPWVAYLILPLFAFANA). At 273 to 286 (GVSLQGVTLDGLTS) the chain is on the periplasmic side. A helical transmembrane segment spans residues 287–310 (ILPLGIIAGLLIGKPLGISLFCWL). Over 311–339 (ALRLKLAHLPEGTTYQQIMVVGILCGIGF) the chain is Cytoplasmic. A helical membrane pass occupies residues 340 to 350 (TMSIFIASLAF). The Periplasmic segment spans residues 351-357 (GSVDPEL). Residues 358 to 380 (INWAKLGILVGSISSAVIGYSWL) form a helical membrane-spanning segment. Topologically, residues 381–388 (RVRLRPSV) are cytoplasmic.

This sequence belongs to the NhaA Na(+)/H(+) (TC 2.A.33) antiporter family.

It is found in the cell inner membrane. It carries out the reaction Na(+)(in) + 2 H(+)(out) = Na(+)(out) + 2 H(+)(in). Na(+)/H(+) antiporter that extrudes sodium in exchange for external protons. The polypeptide is Na(+)/H(+) antiporter NhaA (Shigella flexneri).